Here is a 117-residue protein sequence, read N- to C-terminus: Large ribosomal subunit protein bL20c (117 aa).

This sequence belongs to the bacterial ribosomal protein bL20 family.

The protein resides in the plastid. It localises to the chloroplast. Its function is as follows. Binds directly to 23S ribosomal RNA and is necessary for the in vitro assembly process of the 50S ribosomal subunit. It is not involved in the protein synthesizing functions of that subunit. In Drimys granadensis, this protein is Large ribosomal subunit protein bL20c.